The chain runs to 886 residues: Extended synaptotagmin-3 (886 aa).

Positions 1-21 (MRAEEPCAPGAPSALGAQRTP) are disordered. Residues 1 to 29 (MRAEEPCAPGAPSALGAQRTPGPELRLSS) lie on the Cytoplasmic side of the membrane. The next 2 helical transmembrane spans lie at 30–50 (QLLPELCTFVVRVLFYLGPVY) and 51–71 (LAGYLGLSITWLLLGALLWMW). Over 72–886 (WRRNRRGKLG…ELTPNGQPRS (815 aa)) the chain is Cytoplasmic. In terms of domain architecture, SMP-LTD spans 114–291 (DVERVEWANK…LPNRVTVPVK (178 aa)). C2 domains follow at residues 291–408 (KKGL…DEWF) and 426–566 (SLLT…QLDH). Positions 321, 322, 332, 379, 380, 381, 383, 385, and 386 each coordinate Ca(2+). The tract at residues 613-673 (QGPKAQPQEE…PEPKGKDSAK (61 aa)) is disordered. The segment covering 642 to 659 (RSTTTTTSATTVATEPTS) has biased composition (low complexity). Residues 664-673 (PEPKGKDSAK) are compositionally biased toward basic and acidic residues. The region spanning 754-876 (QLGEIQLTVR…DLIKGFSQWY (123 aa)) is the C2 3 domain. A required for phosphatidylinositol 4,5-bisphosphate-dependent location at the cell membrane region spans residues 801 to 808 (RKWACRKK).

This sequence belongs to the extended synaptotagmin family. In terms of assembly, interacts with ESYT1 and ESYT2. Widely expressed with high level in cerebellum and skin.

The protein resides in the cell membrane. The protein localises to the endoplasmic reticulum membrane. Its function is as follows. Binds glycerophospholipids in a barrel-like domain and may play a role in cellular lipid transport. Tethers the endoplasmic reticulum to the cell membrane and promotes the formation of appositions between the endoplasmic reticulum and the cell membrane. This chain is Extended synaptotagmin-3, found in Homo sapiens (Human).